The sequence spans 164 residues: MELADKASFRDAMAHVGAAVNIITTDGPAGRAGFTASAVCSVTDTPPTLLVCLNRSASVWPVFSEHHTLCVNTLAAGQEALSTLFGGKTAMDERFAAADWQTGATGCPRLEAALVSFDCRIDQRVSVGTHDILFCHVVAITRHPEPRGLMWFGRGYHTLMRPAC.

The protein belongs to the non-flavoprotein flavin reductase family. RutF subfamily.

It catalyses the reaction FMNH2 + NAD(+) = FMN + NADH + 2 H(+). Catalyzes the reduction of FMN to FMNH2 which is used to reduce pyrimidine by RutA via the Rut pathway. This Klebsiella pneumoniae (strain 342) protein is FMN reductase (NADH) RutF.